The following is a 156-amino-acid chain: Small ribosomal subunit protein uS7 (156 aa).

The protein belongs to the universal ribosomal protein uS7 family. Part of the 30S ribosomal subunit. Contacts proteins S9 and S11.

Functionally, one of the primary rRNA binding proteins, it binds directly to 16S rRNA where it nucleates assembly of the head domain of the 30S subunit. Is located at the subunit interface close to the decoding center, probably blocks exit of the E-site tRNA. In Histophilus somni (strain 129Pt) (Haemophilus somnus), this protein is Small ribosomal subunit protein uS7.